A 196-amino-acid chain; its full sequence is GTP cyclohydrolase-2 (196 aa).

Residue 49–53 (RIHSE) coordinates GTP. Zn(2+) contacts are provided by cysteine 54, cysteine 65, and cysteine 67. GTP contacts are provided by residues glutamine 70, 92–94 (EGR), and threonine 114. Aspartate 126 acts as the Proton acceptor in catalysis. Arginine 128 serves as the catalytic Nucleophile. Positions 149 and 154 each coordinate GTP.

Belongs to the GTP cyclohydrolase II family. Homodimer. Zn(2+) is required as a cofactor.

It carries out the reaction GTP + 4 H2O = 2,5-diamino-6-hydroxy-4-(5-phosphoribosylamino)-pyrimidine + formate + 2 phosphate + 3 H(+). The protein operates within cofactor biosynthesis; riboflavin biosynthesis; 5-amino-6-(D-ribitylamino)uracil from GTP: step 1/4. Catalyzes the conversion of GTP to 2,5-diamino-6-ribosylamino-4(3H)-pyrimidinone 5'-phosphate (DARP), formate and pyrophosphate. The chain is GTP cyclohydrolase-2 from Buchnera aphidicola subsp. Schizaphis graminum (strain Sg).